The following is a 1443-amino-acid chain: DNA polymerase III PolC-type (1443 aa).

One can recognise an Exonuclease domain in the interval 408–567; the sequence is FVIFDIETTG…YDTQALKKVF (160 aa).

The protein belongs to the DNA polymerase type-C family. PolC subfamily.

It is found in the cytoplasm. The enzyme catalyses DNA(n) + a 2'-deoxyribonucleoside 5'-triphosphate = DNA(n+1) + diphosphate. In terms of biological role, required for replicative DNA synthesis. This DNA polymerase also exhibits 3' to 5' exonuclease activity. This chain is DNA polymerase III PolC-type, found in Mycoplasma pneumoniae (strain ATCC 29342 / M129 / Subtype 1) (Mycoplasmoides pneumoniae).